The primary structure comprises 246 residues: 14-3-3 protein beta/alpha (246 aa).

An N-acetylmethionine; in 14-3-3 protein beta/alpha; alternate modification is found at Met1. Residue Met1 is modified to N-acetylmethionine. The residue at position 2 (Thr2) is an N-acetylthreonine; in 14-3-3 protein beta/alpha, N-terminally processed. A Phosphothreonine modification is found at Thr2. An N6-acetyllysine modification is found at Lys5. Lys51 is modified (N6-acetyllysine; alternate). Lys51 is covalently cross-linked (Glycyl lysine isopeptide (Lys-Gly) (interchain with G-Cter in SUMO2); alternate). Residue Ser60 is modified to Phosphoserine. Lys70 carries the post-translational modification N6-acetyllysine. A 3'-nitrotyrosine mark is found at Tyr84 and Tyr106. Lys117 is modified (N6-acetyllysine). Ser186 and Ser232 each carry phosphoserine.

This sequence belongs to the 14-3-3 family. Homodimer. Interacts with SAMSN1 and PRKCE. Interacts with AKAP13. Interacts with SSH1 and TORC2/CRTC2. Interacts with ABL1; the interaction results in cytoplasmic location of ABL1 and inhibition of cABL-mediated apoptosis. Interacts with ROR2 (dimer); the interaction results in phosphorylation of YWHAB on tyrosine residues. Interacts with GAB2. Interacts with YAP1 (phosphorylated form). Interacts with the phosphorylated (by AKT1) form of SRPK2. Interacts with PKA-phosphorylated AANAT. Interacts with MYO1C. Interacts with SIRT2. Interacts with the 'Thr-369' phosphorylated form of DAPK2. Interacts with PI4KB, TBC1D22A and TBC1D22B. Interacts with the 'Ser-1134' and 'Ser-1161' phosphorylated form of SOS1. Interacts (via phosphorylated form) with YWHAB; this interaction occurs in a protein kinase AKT1-dependent manner. Interacts with SLITRK1. Interacts with SYNPO2 (phosphorylated form); YWHAB competes with ACTN2 for interaction with SYNPO2. Interacts with RIPOR2 (via phosphorylated form) isoform 2; this interaction occurs in a chemokine-dependent manner and does not compete for binding of RIPOR2 with RHOA nor blocks inhibition of RIPOR2-mediated RHOA activity. Interacts with MARK2 and MARK3. Interacts with TESK1; the interaction is dependent on the phosphorylation of TESK1 'Ser-437' and inhibits TESK1 kinase activity. Interacts with MEFV. Interacts with HDAC4. Interacts with ADAM22 (via C-terminus). In terms of assembly, (Microbial infection) Interacts with herpes simplex virus 1 protein UL46. As to quaternary structure, (Microbial infection) Probably interacts with Chlamydia trachomatis protein IncG. Post-translationally, the alpha, brain-specific form differs from the beta form in being phosphorylated. Phosphorylated on Ser-60 by protein kinase C delta type catalytic subunit in a sphingosine-dependent fashion.

The protein resides in the cytoplasm. The protein localises to the melanosome. It is found in the vacuole membrane. Its function is as follows. Adapter protein implicated in the regulation of a large spectrum of both general and specialized signaling pathways. Binds to a large number of partners, usually by recognition of a phosphoserine or phosphothreonine motif. Binding generally results in the modulation of the activity of the binding partner. Negative regulator of osteogenesis. Blocks the nuclear translocation of the phosphorylated form (by AKT1) of SRPK2 and antagonizes its stimulatory effect on cyclin D1 expression resulting in blockage of neuronal apoptosis elicited by SRPK2. Negative regulator of signaling cascades that mediate activation of MAP kinases via AKAP13. In Homo sapiens (Human), this protein is 14-3-3 protein beta/alpha (YWHAB).